Reading from the N-terminus, the 522-residue chain is Cytochrome P450 26C1 (522 aa).

A helical transmembrane segment spans residues 9–29; it reads LSVLGAAGTALLCAGLLLSLA. Position 459 (C459) interacts with heme.

Belongs to the cytochrome P450 family. Heme serves as cofactor. In terms of tissue distribution, detected in most tissues at very low level.

The protein resides in the membrane. It catalyses the reaction an organic molecule + reduced [NADPH--hemoprotein reductase] + O2 = an alcohol + oxidized [NADPH--hemoprotein reductase] + H2O + H(+). It carries out the reaction all-trans-retinoate + reduced [NADPH--hemoprotein reductase] + O2 = all-trans-4-hydroxyretinoate + oxidized [NADPH--hemoprotein reductase] + H2O + H(+). The enzyme catalyses all-trans-4-hydroxyretinoate + reduced [NADPH--hemoprotein reductase] + O2 = all-trans-4-oxoretinoate + oxidized [NADPH--hemoprotein reductase] + 2 H2O + H(+). The catalysed reaction is 9-cis-retinoate + reduced [NADPH--hemoprotein reductase] + O2 = 9-cis-4-hydroxyretinoate + oxidized [NADPH--hemoprotein reductase] + H2O + H(+). It catalyses the reaction 9-cis-4-hydroxyretinoate + reduced [NADPH--hemoprotein reductase] + O2 = 9-cis-4-oxoretinoate + oxidized [NADPH--hemoprotein reductase] + 2 H2O + H(+). It carries out the reaction all-trans-4-hydroxy-13,14-dihydroretinoate + reduced [NADPH--hemoprotein reductase] + O2 = all-trans-4-oxo-13,14-dihydroretinoate + oxidized [NADPH--hemoprotein reductase] + 2 H2O + H(+). The enzyme catalyses all-trans-13,14-dihydroretinoate + reduced [NADPH--hemoprotein reductase] + O2 = all-trans-4-hydroxy-13,14-dihydroretinoate + oxidized [NADPH--hemoprotein reductase] + H2O + H(+). In terms of biological role, a cytochrome P450 monooxygenase involved in the metabolism of retinoates (RAs), the active metabolites of vitamin A, and critical signaling molecules in animals. RAs exist as at least four different isomers: all-trans-RA (atRA), 9-cis-RA, 13-cis-RA, and 9,13-dicis-RA, where atRA is considered to be the biologically active isomer, although 9-cis-RA and 13-cis-RA also have activity. Catalyzes the oxidation of atRA primarily at C-4. Oxidation of atRA limits its biological activity and initiates a degradative process leading to its eventual elimination, thereby contributes to the regulation of atRA homeostasis and signaling. Able to metabolize other RAs such as 9-cis with high efficiency. Can oxidize all-trans-13,14-dihydroretinoate (DRA) to metabolites which could include all-trans-4-oxo-DRA, all-trans-4-hydroxy-DRA, all-trans-5,8-epoxy-DRA, and all-trans-18-hydroxy-DRA. Shares sequence similarity with other CYP26 family members, but has higher affinity to 9-cis-RA and is much less sensitive to the inhibitory effects of ketoconazole. In cooperation with Cyp26a1, contributes to the CNS patterning and the development of regions of higher visual acuity. The chain is Cytochrome P450 26C1 (CYP26C1) from Homo sapiens (Human).